An 870-amino-acid polypeptide reads, in one-letter code: Probable disease resistance protein At1g59620 (870 aa).

An NB-ARC domain is found at D123–Y432. G167–T174 serves as a coordination point for ATP. LRR repeat units lie at residues L543–L567, I568–L590, M703–P726, P735–K758, L759–Q786, and M808–T833.

The protein belongs to the disease resistance NB-LRR family.

Its function is as follows. Probable disease resistance protein. The sequence is that of Probable disease resistance protein At1g59620 from Arabidopsis thaliana (Mouse-ear cress).